A 141-amino-acid polypeptide reads, in one-letter code: Aspartate 1-decarboxylase (141 aa).

Ser25 (schiff-base intermediate with substrate; via pyruvic acid) is an active-site residue. Residue Ser25 is modified to Pyruvic acid (Ser). Thr57 lines the substrate pocket. Tyr58 (proton donor) is an active-site residue. 73–75 (GAA) contributes to the substrate binding site. The disordered stretch occupies residues 121 to 141 (ASAPVPGSRTERSPQAVVAGG).

Belongs to the PanD family. Heterooctamer of four alpha and four beta subunits. Pyruvate is required as a cofactor. Is synthesized initially as an inactive proenzyme, which is activated by self-cleavage at a specific serine bond to produce a beta-subunit with a hydroxyl group at its C-terminus and an alpha-subunit with a pyruvoyl group at its N-terminus.

Its subcellular location is the cytoplasm. The enzyme catalyses L-aspartate + H(+) = beta-alanine + CO2. The protein operates within cofactor biosynthesis; (R)-pantothenate biosynthesis; beta-alanine from L-aspartate: step 1/1. In terms of biological role, catalyzes the pyruvoyl-dependent decarboxylation of aspartate to produce beta-alanine. The sequence is that of Aspartate 1-decarboxylase from Streptomyces griseus subsp. griseus (strain JCM 4626 / CBS 651.72 / NBRC 13350 / KCC S-0626 / ISP 5235).